The chain runs to 276 residues: Putative olfactory receptor 10J6 (276 aa).

Residues 1 to 25 are Extracellular-facing; that stretch reads MRRKNLTEVTEFVFLGFSRFHKHHI. The N-linked (GlcNAc...) asparagine glycan is linked to N5. A helical transmembrane segment spans residues 26 to 46; it reads TLFVVFLILYTLTVAGNAIIM. The Cytoplasmic segment spans residues 47–54; sequence TIICIDRH. A helical transmembrane segment spans residues 55–75; sequence LHTPMYFFLSMLASSKTVYTL. Over 76–99 the chain is Extracellular; sequence FIIPQMLSSFVTQTQPISLAGCTT. C97 and C188 are disulfide-bonded. Residues 100 to 120 traverse the membrane as a helical segment; the sequence is QTFFFVTLAINNCFLLTVMGY. At 121–139 the chain is on the cytoplasmic side; the sequence is DHYMAICNPLRYRVITSKK. Residues 140-160 form a helical membrane-spanning segment; it reads VCVQLVCGAFSIGLAMAAVQV. Over 161–196 the chain is Extracellular; it reads TSIFTLPFCHTVVGHFFCDILPVMKLSCINTTINEI. N190 carries N-linked (GlcNAc...) asparagine glycosylation. A helical transmembrane segment spans residues 197–216; it reads INFVVRLFVILVPMGLVFIS. Residues 217-236 are Cytoplasmic-facing; the sequence is YVLIISTVLKIASAEGWKKT. A helical membrane pass occupies residues 237–257; that stretch reads FATCAFHLTVVIVHYGCASIA. At 258 to 270 the chain is on the extracellular side; sequence YLMPKSENSIEQD. A helical membrane pass occupies residues 271–276; that stretch reads LLLSVT.

This sequence belongs to the G-protein coupled receptor 1 family.

The protein resides in the cell membrane. In terms of biological role, odorant receptor. The chain is Putative olfactory receptor 10J6 (OR10J6P) from Homo sapiens (Human).